The primary structure comprises 123 residues: Loki profilin-3 (123 aa).

Belongs to the Asgard profilin family.

It localises to the cytoplasm. Its subcellular location is the cytoskeleton. In terms of biological role, binds to actin and affects the structure of the cytoskeleton. At high concentrations inhibits spontaneous rabbit actin nucleation. This strongly suggests this archaea has a profilin-regulated actin system, and actin-type genes can be identified in this organism. This chain is Loki profilin-3, found in Lokiarchaeum sp. (strain GC14_75).